Consider the following 155-residue polypeptide: Large ribosomal subunit protein uL22c (155 aa).

This sequence belongs to the universal ribosomal protein uL22 family. In terms of assembly, part of the 50S ribosomal subunit.

Its subcellular location is the plastid. It is found in the chloroplast. This protein binds specifically to 23S rRNA. Functionally, the globular domain of the protein is located near the polypeptide exit tunnel on the outside of the subunit, while an extended beta-hairpin is found that lines the wall of the exit tunnel in the center of the 70S ribosome. The chain is Large ribosomal subunit protein uL22c (rpl22) from Nicotiana tomentosiformis (Tobacco).